A 1152-amino-acid chain; its full sequence is ATP-dependent helicase/deoxyribonuclease subunit B (1152 aa).

Residues 1–338 (MSIRFIYGRA…LVRDRNYRFR (338 aa)) form the UvrD-like helicase ATP-binding domain. 8-15 (GRAGSGKS) is a binding site for ATP. The region spanning 276-579 (PYRFKNSEEL…NVGDIARIKG (304 aa)) is the UvrD-like helicase C-terminal domain. The [4Fe-4S] cluster site is built by Cys785, Cys1106, Cys1109, and Cys1115.

This sequence belongs to the helicase family. AddB/RexB type 1 subfamily. As to quaternary structure, heterodimer of AddA and AddB. Mg(2+) serves as cofactor. [4Fe-4S] cluster is required as a cofactor.

Functionally, the heterodimer acts as both an ATP-dependent DNA helicase and an ATP-dependent, dual-direction single-stranded exonuclease. Recognizes the chi site generating a DNA molecule suitable for the initiation of homologous recombination. The AddB subunit has 5' -&gt; 3' nuclease activity but not helicase activity. The polypeptide is ATP-dependent helicase/deoxyribonuclease subunit B (Clostridium botulinum (strain Alaska E43 / Type E3)).